A 105-amino-acid chain; its full sequence is Iron-sulfur cluster assembly protein CyaY (105 aa).

The protein belongs to the frataxin family.

Its function is as follows. Involved in iron-sulfur (Fe-S) cluster assembly. May act as a regulator of Fe-S biogenesis. The chain is Iron-sulfur cluster assembly protein CyaY from Photobacterium profundum (strain SS9).